The sequence spans 260 residues: NifU-like protein C1709.19c (260 aa).

The tract at residues 161–231 (IKELIETSIR…IPEVENVVQV (71 aa)) is nifU.

Belongs to the NifU family.

The polypeptide is NifU-like protein C1709.19c (Schizosaccharomyces pombe (strain 972 / ATCC 24843) (Fission yeast)).